The chain runs to 142 residues: Ribosome maturation factor RimP (142 aa).

It belongs to the RimP family.

The protein resides in the cytoplasm. In terms of biological role, required for maturation of 30S ribosomal subunits. The chain is Ribosome maturation factor RimP from Sulfurovum sp. (strain NBC37-1).